The primary structure comprises 147 residues: Hemoglobin subunit epsilon (147 aa).

One can recognise a Globin domain in the interval 3-147 (HWSAEEKQLI…VAHALPRKYH (145 aa)). Heme b contacts are provided by His64 and His93.

This sequence belongs to the globin family. In terms of assembly, heterotetramer of two epsilon chains and two alpha chains. As to expression, red blood cells.

Beta-type chain found in early embryos. The protein is Hemoglobin subunit epsilon (HBE) of Cairina moschata (Muscovy duck).